The sequence spans 238 residues: Probable xyloglucan-specific endo-beta-1,4-glucanase A (238 aa).

The signal sequence occupies residues 1–18 (MKLSLSVALSLAAATAQA). 2 N-linked (GlcNAc...) asparagine glycosylation sites follow: asparagine 106 and asparagine 171.

This sequence belongs to the glycosyl hydrolase 12 (cellulase H) family.

Its subcellular location is the secreted. The catalysed reaction is xyloglucan + H2O = xyloglucan oligosaccharides.. Functionally, catalyzes endohydrolysis of 1,4-beta-D-glucosidic linkages in xyloglucan with retention of the beta-configuration of the glycosyl residues. Specific for xyloglucan and does not hydrolyze other cell wall components. The protein is Probable xyloglucan-specific endo-beta-1,4-glucanase A (xgeA) of Aspergillus fumigatus (strain CBS 144.89 / FGSC A1163 / CEA10) (Neosartorya fumigata).